Reading from the N-terminus, the 488-residue chain is 26S proteasome non-ATPase regulatory subunit 3 homolog A (488 aa).

A PCI domain is found at 240–421; sequence CRYLFYLGKI…GCMVSKETGD (182 aa). Residues 451 to 488 form a disordered region; sequence RFPPNTHKEKESDEKRRERKQQEEELAKHMAEEDDDDF. The segment covering 456-481 has biased composition (basic and acidic residues); sequence THKEKESDEKRRERKQQEEELAKHMA.

It belongs to the proteasome subunit S3 family. In terms of assembly, component of the 19S regulatory particle (RP/PA700) lid subcomplex of the 26S proteasome. The 26S proteasome is composed of a core protease (CP), known as the 20S proteasome, capped at one or both ends by the 19S regulatory particle (RP/PA700). The RP/PA700 complex is composed of at least 17 different subunits in two subcomplexes, the base and the lid, which form the portions proximal and distal to the 20S proteolytic core, respectively. Interacts with UCH1 and UCH2. Ubiquitous with highest expression in flowers.

In terms of biological role, acts as a regulatory subunit of the 26 proteasome which is involved in the ATP-dependent degradation of ubiquitinated proteins. In Arabidopsis thaliana (Mouse-ear cress), this protein is 26S proteasome non-ATPase regulatory subunit 3 homolog A.